Here is a 496-residue protein sequence, read N- to C-terminus: Glutamyl-tRNA(Gln) amidotransferase subunit B, organellar chromatophore (496 aa).

Belongs to the GatB/GatE family. GatB subfamily. As to quaternary structure, subunit of the heterotrimeric GatCAB amidotransferase (AdT) complex, composed of A, B and C subunits.

The protein localises to the plastid. It localises to the organellar chromatophore. It carries out the reaction L-glutamyl-tRNA(Gln) + L-glutamine + ATP + H2O = L-glutaminyl-tRNA(Gln) + L-glutamate + ADP + phosphate + H(+). Its function is as follows. Allows the formation of correctly charged Gln-tRNA(Gln) through the transamidation of misacylated Glu-tRNA(Gln). The reaction takes place in the presence of glutamine and ATP through an activated gamma-phospho-Glu-tRNA(Gln). The protein is Glutamyl-tRNA(Gln) amidotransferase subunit B, organellar chromatophore of Paulinella chromatophora.